Reading from the N-terminus, the 378-residue chain is Protein RecA (378 aa).

79–86 (GPESSGKT) is a binding site for ATP.

Belongs to the RecA family.

It is found in the cytoplasm. In terms of biological role, can catalyze the hydrolysis of ATP in the presence of single-stranded DNA, the ATP-dependent uptake of single-stranded DNA by duplex DNA, and the ATP-dependent hybridization of homologous single-stranded DNAs. It interacts with LexA causing its activation and leading to its autocatalytic cleavage. In Streptococcus pyogenes serotype M2 (strain MGAS10270), this protein is Protein RecA.